Here is a 264-residue protein sequence, read N- to C-terminus: Major prion protein (264 aa).

An N-terminal signal peptide occupies residues 1-24 (MVKRHIGSWILVLFVVMWSDVGLC). Residues 25–241 (KKRPKPGGGW…ESQAYYQRGA (217 aa)) are interaction with GRB2, ERI3 and SYN1. A disordered region spans residues 27-119 (RPKPGGGWNT…WNKPSKPKTN (93 aa)). 6 consecutive repeat copies span residues 54–62 (SQGGGGWGQ), 63–70 (PHGGGWGQ), 71–78 (PHGGGWGQ), 79–86 (PHGGGWGQ), 87–94 (PHGGGWGQ), and 95–103 (PHGGGGWGQ). Positions 54–103 (SQGGGGWGQPHGGGWGQPHGGGWGQPHGGGWGQPHGGGWGQPHGGGGWGQ) are 6 X 8 AA tandem repeats of P-H-G-G-G-W-G-Q. Positions 55-105 (QGGGGWGQPHGGGWGQPHGGGWGQPHGGGWGQPHGGGWGQPHGGGGWGQGG) are enriched in gly residues. 12 residues coordinate Cu(2+): histidine 72, glycine 73, glycine 74, histidine 80, glycine 81, glycine 82, histidine 88, glycine 89, glycine 90, histidine 96, glycine 98, and glycine 99. Cysteine 190 and cysteine 225 are joined by a disulfide. Asparagine 192 and asparagine 208 each carry an N-linked (GlcNAc...) asparagine glycan. Alanine 241 carries the GPI-anchor amidated alanine lipid modification. Positions 242-264 (SVILFSSPPVILLISLLIFLIVG) are cleaved as a propeptide — removed in mature form.

This sequence belongs to the prion family. Monomer and homodimer. Has a tendency to aggregate into amyloid fibrils containing a cross-beta spine, formed by a steric zipper of superposed beta-strands. Soluble oligomers may represent an intermediate stage on the path to fibril formation. Copper binding may promote oligomerization. Interacts with GRB2, APP, ERI3/PRNPIP and SYN1. Mislocalized cytosolically exposed PrP interacts with MGRN1; this interaction alters MGRN1 subcellular location and causes lysosomal enlargement. Interacts with KIAA1191.

It localises to the cell membrane. The protein localises to the golgi apparatus. Functionally, its primary physiological function is unclear. Has cytoprotective activity against internal or environmental stresses. May play a role in neuronal development and synaptic plasticity. May be required for neuronal myelin sheath maintenance. May play a role in iron uptake and iron homeostasis. Soluble oligomers are toxic to cultured neuroblastoma cells and induce apoptosis (in vitro). Association with GPC1 (via its heparan sulfate chains) targets PRNP to lipid rafts. Also provides Cu(2+) or Zn(2+) for the ascorbate-mediated GPC1 deaminase degradation of its heparan sulfate side chains. The sequence is that of Major prion protein (PRNP) from Bubalus bubalis (Domestic water buffalo).